Here is a 326-residue protein sequence, read N- to C-terminus: tRNA-modifying protein YgfZ (326 aa).

Trp27 and Trp189 together coordinate folate.

The protein belongs to the tRNA-modifying YgfZ family.

Its subcellular location is the cytoplasm. In terms of biological role, folate-binding protein involved in regulating the level of ATP-DnaA and in the modification of some tRNAs. It is probably a key factor in regulatory networks that act via tRNA modification, such as initiation of chromosomal replication. The protein is tRNA-modifying protein YgfZ of Escherichia coli O17:K52:H18 (strain UMN026 / ExPEC).